The sequence spans 154 residues: Probable prefoldin subunit 5 (154 aa).

The protein belongs to the prefoldin subunit alpha family. Heterohexamer of two PFD-alpha type and four PFD-beta type subunits.

Binds specifically to cytosolic chaperonin (c-CPN) and transfers target proteins to it. Binds to nascent polypeptide chain and promotes folding in an environment in which there are many competing pathways for nonnative proteins. This Caenorhabditis briggsae protein is Probable prefoldin subunit 5.